A 600-amino-acid polypeptide reads, in one-letter code: Ligand-dependent nuclear receptor corepressor-like protein (600 aa).

3 disordered regions span residues 1–24 (MEKGTDRMAAAAPAPPAAASQCRS), 102–122 (SVIGSSQSTPTEELSSQGQSN), and 495–519 (DGTSENTEDSLDRKDNKQPRKKRGR). Positions 104 to 122 (IGSSQSTPTEELSSQGQSN) are enriched in polar residues. Positions 514–566 (RKKRGRYRQYDHEIMEEAIAMVMSGKMSVSKAQGIYGVPHSTLEYKVKERSGT) constitute an HTH psq-type domain. Residues 542 to 562 (VSKAQGIYGVPHSTLEYKVKE) constitute a DNA-binding region (H-T-H motif). A disordered region spans residues 581–600 (GLFNMTDSGTGSCKTSSKPV). Polar residues predominate over residues 583-600 (FNMTDSGTGSCKTSSKPV).

Its subcellular location is the nucleus. Functionally, may act as transcription activator that binds DNA elements with the sequence 5'-CCCTATCGATCGATCTCTACCT-3'. The polypeptide is Ligand-dependent nuclear receptor corepressor-like protein (LCORL) (Gallus gallus (Chicken)).